The primary structure comprises 596 residues: Aspartate--tRNA(Asp/Asn) ligase (596 aa).

Glutamate 169 contacts L-aspartate. Positions 193 to 196 (QLFK) are aspartate. Arginine 215 lines the L-aspartate pocket. Residues 215 to 217 (RDE) and glutamine 224 contribute to the ATP site. An L-aspartate-binding site is contributed by histidine 447. Glutamate 481 is an ATP binding site. Arginine 488 contributes to the L-aspartate binding site. ATP is bound at residue 533 to 536 (GWDR). The interval 559–596 (GYDPLTQAPAPITAQQRKEAGVDFKPEAKKADPGATKA) is disordered. A compositionally biased stretch (basic and acidic residues) spans 574–590 (QRKEAGVDFKPEAKKAD).

The protein belongs to the class-II aminoacyl-tRNA synthetase family. Type 1 subfamily. As to quaternary structure, homodimer.

The protein localises to the cytoplasm. It catalyses the reaction tRNA(Asx) + L-aspartate + ATP = L-aspartyl-tRNA(Asx) + AMP + diphosphate. Aspartyl-tRNA synthetase with relaxed tRNA specificity since it is able to aspartylate not only its cognate tRNA(Asp) but also tRNA(Asn). Reaction proceeds in two steps: L-aspartate is first activated by ATP to form Asp-AMP and then transferred to the acceptor end of tRNA(Asp/Asn). This is Aspartate--tRNA(Asp/Asn) ligase from Arthrobacter sp. (strain FB24).